A 180-amino-acid chain; its full sequence is ATP-dependent protease subunit HslV (180 aa).

The active site involves Thr7. Na(+) contacts are provided by Gly165, Cys168, and Thr171.

This sequence belongs to the peptidase T1B family. HslV subfamily. A double ring-shaped homohexamer of HslV is capped on each side by a ring-shaped HslU homohexamer. The assembly of the HslU/HslV complex is dependent on binding of ATP.

The protein resides in the cytoplasm. It carries out the reaction ATP-dependent cleavage of peptide bonds with broad specificity.. Allosterically activated by HslU binding. Protease subunit of a proteasome-like degradation complex believed to be a general protein degrading machinery. The protein is ATP-dependent protease subunit HslV of Bacillus cereus (strain Q1).